Consider the following 334-residue polypeptide: N-acetyl-gamma-glutamyl-phosphate reductase (334 aa).

Residue C154 is part of the active site.

Belongs to the NAGSA dehydrogenase family. Type 1 subfamily.

The protein resides in the cytoplasm. The enzyme catalyses N-acetyl-L-glutamate 5-semialdehyde + phosphate + NADP(+) = N-acetyl-L-glutamyl 5-phosphate + NADPH + H(+). Its pathway is amino-acid biosynthesis; L-arginine biosynthesis; N(2)-acetyl-L-ornithine from L-glutamate: step 3/4. Functionally, catalyzes the NADPH-dependent reduction of N-acetyl-5-glutamyl phosphate to yield N-acetyl-L-glutamate 5-semialdehyde. This is N-acetyl-gamma-glutamyl-phosphate reductase from Yersinia pestis.